The following is a 616-amino-acid chain: Chaperone protein HscA (616 aa).

Belongs to the heat shock protein 70 family.

Functionally, chaperone involved in the maturation of iron-sulfur cluster-containing proteins. Has a low intrinsic ATPase activity which is markedly stimulated by HscB. Involved in the maturation of IscU. This is Chaperone protein HscA from Cronobacter sakazakii (strain ATCC BAA-894) (Enterobacter sakazakii).